The sequence spans 202 residues: Dephospho-CoA kinase (202 aa).

The region spanning 6-202 (KISVTGDPSS…QCFKALKGTI (197 aa)) is the DPCK domain. 14–19 (SSGKTE) is a binding site for ATP.

The protein belongs to the CoaE family.

It localises to the cytoplasm. The enzyme catalyses 3'-dephospho-CoA + ATP = ADP + CoA + H(+). It functions in the pathway cofactor biosynthesis; coenzyme A biosynthesis; CoA from (R)-pantothenate: step 5/5. Its function is as follows. Catalyzes the phosphorylation of the 3'-hydroxyl group of dephosphocoenzyme A to form coenzyme A. The protein is Dephospho-CoA kinase of Chlamydia muridarum (strain MoPn / Nigg).